The chain runs to 191 residues: Threonylcarbamoyl-AMP synthase (191 aa).

The 182-residue stretch at 10 to 191 (PFRVRHAAAE…DGRSGAYLRR (182 aa)) folds into the YrdC-like domain.

The protein belongs to the SUA5 family. TsaC subfamily.

It is found in the cytoplasm. It carries out the reaction L-threonine + hydrogencarbonate + ATP = L-threonylcarbamoyladenylate + diphosphate + H2O. In terms of biological role, required for the formation of a threonylcarbamoyl group on adenosine at position 37 (t(6)A37) in tRNAs that read codons beginning with adenine. Catalyzes the conversion of L-threonine, HCO(3)(-)/CO(2) and ATP to give threonylcarbamoyl-AMP (TC-AMP) as the acyladenylate intermediate, with the release of diphosphate. This chain is Threonylcarbamoyl-AMP synthase, found in Halorhodospira halophila (strain DSM 244 / SL1) (Ectothiorhodospira halophila (strain DSM 244 / SL1)).